The sequence spans 89 residues: Small ribosomal subunit protein bS20 (89 aa).

Residues Met-1 to Asn-11 show a composition bias toward polar residues. Residues Met-1 to Lys-22 are disordered.

The protein belongs to the bacterial ribosomal protein bS20 family.

Its function is as follows. Binds directly to 16S ribosomal RNA. The protein is Small ribosomal subunit protein bS20 of Frankia casuarinae (strain DSM 45818 / CECT 9043 / HFP020203 / CcI3).